The sequence spans 142 residues: Large ribosomal subunit protein uL11 (142 aa).

Belongs to the universal ribosomal protein uL11 family. In terms of assembly, part of the ribosomal stalk of the 50S ribosomal subunit. Interacts with L10 and the large rRNA to form the base of the stalk. L10 forms an elongated spine to which L12 dimers bind in a sequential fashion forming a multimeric L10(L12)X complex. Post-translationally, one or more lysine residues are methylated.

Its function is as follows. Forms part of the ribosomal stalk which helps the ribosome interact with GTP-bound translation factors. The protein is Large ribosomal subunit protein uL11 of Shigella boydii serotype 18 (strain CDC 3083-94 / BS512).